Consider the following 110-residue polypeptide: Heat shock protein Hsp-12.2 (110 aa).

A sHSP domain is found at 15-110 (DWPLQHNDGV…VLTITASKKA (96 aa)).

It belongs to the small heat shock protein (HSP20) family.

The protein is Heat shock protein Hsp-12.2 (hsp-12.2) of Caenorhabditis elegans.